Here is a 624-residue protein sequence, read N- to C-terminus: DNA mismatch repair protein MutL (624 aa).

A disordered region spans residues 416 to 436; that stretch reads LTPSVDQPDTGDGENPVAPEK.

It belongs to the DNA mismatch repair MutL/HexB family.

Functionally, this protein is involved in the repair of mismatches in DNA. It is required for dam-dependent methyl-directed DNA mismatch repair. May act as a 'molecular matchmaker', a protein that promotes the formation of a stable complex between two or more DNA-binding proteins in an ATP-dependent manner without itself being part of a final effector complex. The sequence is that of DNA mismatch repair protein MutL from Chlorobaculum tepidum (strain ATCC 49652 / DSM 12025 / NBRC 103806 / TLS) (Chlorobium tepidum).